Consider the following 215-residue polypeptide: Phosphatidylserine decarboxylase proenzyme (215 aa).

Catalysis depends on S181, which acts as the Schiff-base intermediate with substrate; via pyruvic acid. S181 carries the post-translational modification Pyruvic acid (Ser); by autocatalysis.

This sequence belongs to the phosphatidylserine decarboxylase family. PSD-A subfamily. As to quaternary structure, heterodimer of a large membrane-associated beta subunit and a small pyruvoyl-containing alpha subunit. It depends on pyruvate as a cofactor. Post-translationally, is synthesized initially as an inactive proenzyme. Formation of the active enzyme involves a self-maturation process in which the active site pyruvoyl group is generated from an internal serine residue via an autocatalytic post-translational modification. Two non-identical subunits are generated from the proenzyme in this reaction, and the pyruvate is formed at the N-terminus of the alpha chain, which is derived from the carboxyl end of the proenzyme. The post-translation cleavage follows an unusual pathway, termed non-hydrolytic serinolysis, in which the side chain hydroxyl group of the serine supplies its oxygen atom to form the C-terminus of the beta chain, while the remainder of the serine residue undergoes an oxidative deamination to produce ammonia and the pyruvoyl prosthetic group on the alpha chain.

Its subcellular location is the cell membrane. It carries out the reaction a 1,2-diacyl-sn-glycero-3-phospho-L-serine + H(+) = a 1,2-diacyl-sn-glycero-3-phosphoethanolamine + CO2. The protein operates within phospholipid metabolism; phosphatidylethanolamine biosynthesis; phosphatidylethanolamine from CDP-diacylglycerol: step 2/2. Its function is as follows. Catalyzes the formation of phosphatidylethanolamine (PtdEtn) from phosphatidylserine (PtdSer). This chain is Phosphatidylserine decarboxylase proenzyme, found in Polynucleobacter asymbioticus (strain DSM 18221 / CIP 109841 / QLW-P1DMWA-1) (Polynucleobacter necessarius subsp. asymbioticus).